Reading from the N-terminus, the 260-residue chain is Adenosylcobinamide-GDP ribazoletransferase (260 aa).

6 helical membrane passes run tryptophan 7–proline 27, leucine 45–glycine 65, alanine 117–phenylalanine 137, tryptophan 145–tyrosine 165, leucine 187–isoleucine 207, and tryptophan 210–phenylalanine 230.

The protein belongs to the CobS family. Mg(2+) is required as a cofactor.

It localises to the cell inner membrane. The enzyme catalyses alpha-ribazole + adenosylcob(III)inamide-GDP = adenosylcob(III)alamin + GMP + H(+). The catalysed reaction is alpha-ribazole 5'-phosphate + adenosylcob(III)inamide-GDP = adenosylcob(III)alamin 5'-phosphate + GMP + H(+). It participates in cofactor biosynthesis; adenosylcobalamin biosynthesis; adenosylcobalamin from cob(II)yrinate a,c-diamide: step 7/7. Joins adenosylcobinamide-GDP and alpha-ribazole to generate adenosylcobalamin (Ado-cobalamin). Also synthesizes adenosylcobalamin 5'-phosphate from adenosylcobinamide-GDP and alpha-ribazole 5'-phosphate. The chain is Adenosylcobinamide-GDP ribazoletransferase from Synechocystis sp. (strain ATCC 27184 / PCC 6803 / Kazusa).